A 308-amino-acid polypeptide reads, in one-letter code: Porphobilinogen deaminase (308 aa).

Position 241 is an S-(dipyrrolylmethanemethyl)cysteine (Cys241).

Belongs to the HMBS family. Monomer. The cofactor is dipyrromethane.

It catalyses the reaction 4 porphobilinogen + H2O = hydroxymethylbilane + 4 NH4(+). It functions in the pathway porphyrin-containing compound metabolism; protoporphyrin-IX biosynthesis; coproporphyrinogen-III from 5-aminolevulinate: step 2/4. Functionally, tetrapolymerization of the monopyrrole PBG into the hydroxymethylbilane pre-uroporphyrinogen in several discrete steps. The chain is Porphobilinogen deaminase from Staphylococcus epidermidis (strain ATCC 35984 / DSM 28319 / BCRC 17069 / CCUG 31568 / BM 3577 / RP62A).